The following is a 64-amino-acid chain: Large ribosomal subunit protein bL35 (64 aa).

This sequence belongs to the bacterial ribosomal protein bL35 family.

This chain is Large ribosomal subunit protein bL35, found in Pseudomonas savastanoi pv. phaseolicola (strain 1448A / Race 6) (Pseudomonas syringae pv. phaseolicola (strain 1448A / Race 6)).